Reading from the N-terminus, the 345-residue chain is Protein RecA (345 aa).

65-72 serves as a coordination point for ATP; it reads GPESSGKT.

The protein belongs to the RecA family.

It is found in the cytoplasm. Can catalyze the hydrolysis of ATP in the presence of single-stranded DNA, the ATP-dependent uptake of single-stranded DNA by duplex DNA, and the ATP-dependent hybridization of homologous single-stranded DNAs. It interacts with LexA causing its activation and leading to its autocatalytic cleavage. The chain is Protein RecA from Hahella chejuensis (strain KCTC 2396).